The sequence spans 338 residues: STEAP1 protein (338 aa).

The next 2 membrane-spanning stretches (helical) occupy residues 70–90 (WHLPIKIAAIVSSLTFLYTLL) and 118–138 (PMVSITLLALVYLPGVIAAIV). One can recognise a Ferric oxidoreductase domain in the interval 117–264 (LPMVSITLLA…TLGIVSLLLG (148 aa)). FAD is bound by residues glutamine 139 and arginine 160. 4 consecutive transmembrane segments (helical) span residues 163–183 (FGLLSFFFAVLHAVYSLSYPM), 217–237 (IYVSLGIVTLAILALLAVTSI), 252–272 (IQSTLGIVSLLLGTIHALIFA), and 290–310 (FMIAVFLPTVVLICKVILLLP). Histidine 174 provides a ligand contact to heme b. Serine 236 and glutamine 253 together coordinate FAD. Position 267 (histidine 267) interacts with heme b.

It belongs to the STEAP family. Homotrimer. Requires FAD as cofactor. Heme b serves as cofactor.

Its subcellular location is the endosome membrane. It localises to the cell membrane. Does not function as a metalloreductase due to the absence of binding sites for the electron-donating substrate NADPH. In Sus scrofa (Pig), this protein is STEAP1 protein (STEAP1).